Here is a 396-residue protein sequence, read N- to C-terminus: Queuine tRNA-ribosyltransferase catalytic subunit 1 (396 aa).

The active-site Proton acceptor is the D99. Residues 99 to 103, D153, Q196, and G223 each bind queuine; that span reads DSGGF. Positions 254 to 260 are RNA binding; the sequence is GVGYATD. The active-site Nucleophile is D273. An RNA binding; important for wobble base 34 recognition region spans residues 278–282; the sequence is TRTAR. 4 residues coordinate Zn(2+): C311, C313, C316, and H341.

Belongs to the queuine tRNA-ribosyltransferase family. In terms of assembly, heterodimer of a catalytic subunit qtrt1 and an accessory subunit qtrt2. Requires Zn(2+) as cofactor.

Its subcellular location is the cytoplasm. It is found in the mitochondrion outer membrane. The catalysed reaction is guanosine(34) in tRNA + queuine = queuosine(34) in tRNA + guanine. Its function is as follows. Catalytic subunit of the queuine tRNA-ribosyltransferase (TGT) that catalyzes the base-exchange of a guanine (G) residue with queuine (Q) at position 34 (anticodon wobble position) in tRNAs with GU(N) anticodons (tRNA-Asp, -Asn, -His and -Tyr), resulting in the hypermodified nucleoside queuosine (7-(((4,5-cis-dihydroxy-2-cyclopenten-1-yl)amino)methyl)-7-deazaguanosine). Catalysis occurs through a double-displacement mechanism. The nucleophile active site attacks the C1' of nucleotide 34 to detach the guanine base from the RNA, forming a covalent enzyme-RNA intermediate. The proton acceptor active site deprotonates the incoming queuine, allowing a nucleophilic attack on the C1' of the ribose to form the product. The sequence is that of Queuine tRNA-ribosyltransferase catalytic subunit 1 from Xenopus laevis (African clawed frog).